Reading from the N-terminus, the 88-residue chain is Small ribosomal subunit protein uS17 (88 aa).

It belongs to the universal ribosomal protein uS17 family. As to quaternary structure, part of the 30S ribosomal subunit.

One of the primary rRNA binding proteins, it binds specifically to the 5'-end of 16S ribosomal RNA. The sequence is that of Small ribosomal subunit protein uS17 from Saccharophagus degradans (strain 2-40 / ATCC 43961 / DSM 17024).